The primary structure comprises 261 residues: Acidic leucine-rich nuclear phosphoprotein 32 family member A (261 aa).

4 LRR repeats span residues 16–37 (QITE…TDEY), 39–60 (ALES…PKLP), 61–83 (NLKK…TTSP), and 84–105 (KLQY…KPLE). The LRRCT domain occupies 118–156 (NDATQVDNYREKIFKMLPSLNFLDGFDCNDEEVQSDGDD). 2 stretches are compositionally biased toward acidic residues: residues 145–185 (CNDE…EEAN) and 194–229 (YNDD…DGDA). The disordered stretch occupies residues 145–261 (CNDEEVQSDG…VRGKKRKHDG (117 aa)). A compositionally biased stretch (basic and acidic residues) spans 238-252 (AKDKDGEKEADESQV).

Belongs to the ANP32 family. Phosphorylated on serine residues.

It is found in the nucleus. The protein localises to the cytoplasm. Implicated in a number of cellular processes, including proliferation, differentiation, caspase-dependent and caspase-independent apoptosis, suppression of transformation (tumor suppressor), inhibition of protein phosphatase 2A, regulation of mRNA trafficking and stability, and inhibition of acetyltransferases as part of the INHAT (inhibitor of histone acetyltransferases) complex. This chain is Acidic leucine-rich nuclear phosphoprotein 32 family member A (Anp32a), found in Drosophila melanogaster (Fruit fly).